The sequence spans 560 residues: Dihydroxy-acid dehydratase (560 aa).

C52 lines the [2Fe-2S] cluster pocket. D84 serves as a coordination point for Mg(2+). C125 contacts [2Fe-2S] cluster. Mg(2+) contacts are provided by D126 and K127. At K127 the chain carries N6-carboxylysine. C197 serves as a coordination point for [2Fe-2S] cluster. Residue E449 participates in Mg(2+) binding. S475 functions as the Proton acceptor in the catalytic mechanism.

The protein belongs to the IlvD/Edd family. As to quaternary structure, homodimer. [2Fe-2S] cluster is required as a cofactor. Mg(2+) serves as cofactor.

The enzyme catalyses (2R)-2,3-dihydroxy-3-methylbutanoate = 3-methyl-2-oxobutanoate + H2O. The catalysed reaction is (2R,3R)-2,3-dihydroxy-3-methylpentanoate = (S)-3-methyl-2-oxopentanoate + H2O. It functions in the pathway amino-acid biosynthesis; L-isoleucine biosynthesis; L-isoleucine from 2-oxobutanoate: step 3/4. Its pathway is amino-acid biosynthesis; L-valine biosynthesis; L-valine from pyruvate: step 3/4. Functions in the biosynthesis of branched-chain amino acids. Catalyzes the dehydration of (2R,3R)-2,3-dihydroxy-3-methylpentanoate (2,3-dihydroxy-3-methylvalerate) into 2-oxo-3-methylpentanoate (2-oxo-3-methylvalerate) and of (2R)-2,3-dihydroxy-3-methylbutanoate (2,3-dihydroxyisovalerate) into 2-oxo-3-methylbutanoate (2-oxoisovalerate), the penultimate precursor to L-isoleucine and L-valine, respectively. This is Dihydroxy-acid dehydratase from Sulfurisphaera tokodaii (strain DSM 16993 / JCM 10545 / NBRC 100140 / 7) (Sulfolobus tokodaii).